We begin with the raw amino-acid sequence, 1515 residues long: Glutamate synthase [NADPH] large chain (1515 aa).

A propeptide spanning residues 1–36 is cleaved from the precursor; it reads MTTELNQGEQFVADFRANAAALTTANAYNPEDEHDA. The active-site For GATase activity is the C37. The 396-residue stretch at 37 to 432 folds into the Glutamine amidotransferase type-2 domain; that stretch reads CGVGFIAAID…PGEMIAVDLQ (396 aa). The segment at 916-937 is disordered; sequence AKSDSGEGGEDPARFRPDKNGD. The span at 926–936 shows a compositional bias: basic and acidic residues; the sequence is DPARFRPDKNG. Residues 1085 to 1142 and 1086 to 1142 contribute to the FMN site; these read LSEV…IMVR and SEVH…IMVR. C1138, C1144, and C1149 together coordinate [3Fe-4S] cluster.

This sequence belongs to the glutamate synthase family. In terms of assembly, aggregate of 4 catalytic active heterodimers, consisting of a large and a small subunit. [3Fe-4S] cluster is required as a cofactor. It depends on FAD as a cofactor. FMN serves as cofactor.

It carries out the reaction 2 L-glutamate + NADP(+) = L-glutamine + 2-oxoglutarate + NADPH + H(+). The protein operates within amino-acid biosynthesis; L-glutamate biosynthesis via GLT pathway; L-glutamate from 2-oxoglutarate and L-glutamine (NADP(+) route): step 1/1. It participates in energy metabolism; nitrogen metabolism. This Azospirillum brasilense protein is Glutamate synthase [NADPH] large chain (gltB).